The sequence spans 450 residues: Keratin, type I cytoskeletal 25 (450 aa).

Over residues 1-11 (MSLRLSSASRR) the composition is skewed to low complexity. The tract at residues 1–20 (MSLRLSSASRRSCPRPTTGS) is disordered. The head stretch occupies residues 1–78 (MSLRLSSASR…VNERGLLSGN (78 aa)). The segment at 79-114 (EKVTMQNLNDRLASYLDSVHALEEANADLEQKIKGW) is coil 1A. An IF rod domain is found at 79 to 394 (EKVTMQNLND…LLIGGDDGAC (316 aa)). Residues 115 to 136 (YEKFGPGSCRGLDHDYSRYFPI) are linker 1. The interval 137–228 (IDDLKNQIIA…KNHKEEMQVL (92 aa)) is coil 1B. The segment at 229–251 (QCAAGGNVNVEMNAAPGVDLTVL) is linker 12. Residues 252-390 (LNNMRAEYEA…ETYCLLIGGD (139 aa)) form a coil 2 region. The segment at 391 to 450 (DGACKSGGYKSKDYGSGNVGSQVKDPAKAIVVKKVLEEVDQRSKILTTRLHSLEEKSQSN) is tail. The residue at position 442 (serine 442) is a Phosphoserine.

It belongs to the intermediate filament family. Heterodimer of a type I and a type II keratin. Heterodimer with type II keratin KRT5 leading to the formation of keratin intermediate filament (KIF) network. Interacts with KRT6A to form filaments. Strongly expressed in skin and scalp, and weak expression observed in thymus and tongue. In the hair follicle, expressed in Henle layer, Huxley layer and in the inner root sheath cuticle of the hair follicle. Expression extends from the bulb region up to the point of differentiation into the three layers. Also present in the medulla of beard hair (at protein level).

It is found in the cytoplasm. In terms of biological role, essential for the proper assembly of type I and type II keratin protein complexes and formation of keratin intermediate filaments in the inner root sheath (irs). Plays a role in the cytoskeleton organization. This Homo sapiens (Human) protein is Keratin, type I cytoskeletal 25.